We begin with the raw amino-acid sequence, 351 residues long: C(7)-cyclitol 7-kinase (351 aa).

Belongs to the ROK (NagC/XylR) family.

It carries out the reaction valienone + ATP = valienone 7-phosphate + ADP + H(+). It catalyses the reaction validone + ATP = validone 7-phosphate + ADP + H(+). Functionally, involved in the biosynthesis of the antifungal agent validamycin A. Catalyzes the phosphorylation of valienone and validone to their 7-phosphate derivatives. In Streptomyces hygroscopicus subsp. jinggangensis (strain 5008), this protein is C(7)-cyclitol 7-kinase.